The sequence spans 350 residues: Biotin synthase (350 aa).

The region spanning 63-281 (GDIELATLLS…IAVARITMPK (219 aa)) is the Radical SAM core domain. Residues Cys-78, Cys-82, and Cys-85 each coordinate [4Fe-4S] cluster. Residues Cys-122, Cys-153, Cys-213, and Arg-285 each coordinate [2Fe-2S] cluster.

This sequence belongs to the radical SAM superfamily. Biotin synthase family. In terms of assembly, homodimer. It depends on [4Fe-4S] cluster as a cofactor. The cofactor is [2Fe-2S] cluster.

The catalysed reaction is (4R,5S)-dethiobiotin + (sulfur carrier)-SH + 2 reduced [2Fe-2S]-[ferredoxin] + 2 S-adenosyl-L-methionine = (sulfur carrier)-H + biotin + 2 5'-deoxyadenosine + 2 L-methionine + 2 oxidized [2Fe-2S]-[ferredoxin]. It participates in cofactor biosynthesis; biotin biosynthesis; biotin from 7,8-diaminononanoate: step 2/2. In terms of biological role, catalyzes the conversion of dethiobiotin (DTB) to biotin by the insertion of a sulfur atom into dethiobiotin via a radical-based mechanism. The chain is Biotin synthase from Acidovorax ebreus (strain TPSY) (Diaphorobacter sp. (strain TPSY)).